The following is a 243-amino-acid chain: Ubiquinone/menaquinone biosynthesis C-methyltransferase UbiE (243 aa).

S-adenosyl-L-methionine is bound by residues Thr-69, Asp-90, and 116 to 117 (DA).

The protein belongs to the class I-like SAM-binding methyltransferase superfamily. MenG/UbiE family.

It catalyses the reaction a 2-demethylmenaquinol + S-adenosyl-L-methionine = a menaquinol + S-adenosyl-L-homocysteine + H(+). The catalysed reaction is a 2-methoxy-6-(all-trans-polyprenyl)benzene-1,4-diol + S-adenosyl-L-methionine = a 5-methoxy-2-methyl-3-(all-trans-polyprenyl)benzene-1,4-diol + S-adenosyl-L-homocysteine + H(+). Its pathway is quinol/quinone metabolism; menaquinone biosynthesis; menaquinol from 1,4-dihydroxy-2-naphthoate: step 2/2. The protein operates within cofactor biosynthesis; ubiquinone biosynthesis. In terms of biological role, methyltransferase required for the conversion of demethylmenaquinol (DMKH2) to menaquinol (MKH2) and the conversion of 2-polyprenyl-6-methoxy-1,4-benzoquinol (DDMQH2) to 2-polyprenyl-3-methyl-6-methoxy-1,4-benzoquinol (DMQH2). The chain is Ubiquinone/menaquinone biosynthesis C-methyltransferase UbiE from Burkholderia multivorans (strain ATCC 17616 / 249).